The primary structure comprises 250 residues: DNA polymerase sliding clamp (250 aa).

It belongs to the PCNA family. As to quaternary structure, homotrimer. The subunits circularize to form a toroid; DNA passes through its center. Replication factor C (RFC) is required to load the toroid on the DNA.

Its function is as follows. Sliding clamp subunit that acts as a moving platform for DNA processing. Responsible for tethering the catalytic subunit of DNA polymerase and other proteins to DNA during high-speed replication. The polypeptide is DNA polymerase sliding clamp (Methanococcus maripaludis (strain C6 / ATCC BAA-1332)).